Reading from the N-terminus, the 379-residue chain is Anhydro-N-acetylmuramic acid kinase (379 aa).

Residue 9–16 (GTSVDGID) participates in ATP binding.

The protein belongs to the anhydro-N-acetylmuramic acid kinase family.

It carries out the reaction 1,6-anhydro-N-acetyl-beta-muramate + ATP + H2O = N-acetyl-D-muramate 6-phosphate + ADP + H(+). The protein operates within amino-sugar metabolism; 1,6-anhydro-N-acetylmuramate degradation. It functions in the pathway cell wall biogenesis; peptidoglycan recycling. In terms of biological role, catalyzes the specific phosphorylation of 1,6-anhydro-N-acetylmuramic acid (anhMurNAc) with the simultaneous cleavage of the 1,6-anhydro ring, generating MurNAc-6-P. Is required for the utilization of anhMurNAc either imported from the medium or derived from its own cell wall murein, and thus plays a role in cell wall recycling. The chain is Anhydro-N-acetylmuramic acid kinase from Acaryochloris marina (strain MBIC 11017).